A 160-amino-acid chain; its full sequence is pH-gated potassium channel KcsA (160 aa).

Residues 1-27 (MPPMLSGLLARLVKLLLGRHGSALHWR) lie on the Cytoplasmic side of the membrane. The helical transmembrane segment at 28-50 (AAGAATVLLVIVLLAGSYLAVLA) threads the bilayer. Over 51-61 (ERGAPGAQLIT) the chain is Extracellular. The segment at residues 62–72 (YPRALWWSVET) is an intramembrane region (helical; Pore-forming). The segment at residues 73 to 80 (ATTVGYGD) is an intramembrane region (pore-forming). Positions 75–80 (TVGYGD) match the Selectivity filter motif. Residues 81–87 (LYPVTLW) lie on the Extracellular side of the membrane. Residues 88-111 (GRLVAVVVMVAGITSFGLVTAALA) form a helical membrane-spanning segment. At 112–160 (TWFVGREQERRGHFVRHSEKAAEEAYTRTTRALHERFDRLERMLDDNRR) the chain is on the cytoplasmic side.

Belongs to the potassium channel family. In terms of assembly, homotetramer.

It localises to the cell membrane. Its function is as follows. Acts as a pH-gated potassium ion channel; changing the cytosolic pH from 7 to 4 opens the channel. In Streptomyces coelicolor (strain ATCC BAA-471 / A3(2) / M145), this protein is pH-gated potassium channel KcsA (kcsA).